A 392-amino-acid chain; its full sequence is MLLMLSQWLQGLSPEFGFFRVFQYLTFRAVMAAMTALLIGLLAGPKVIRMLTALKIGQPIRGYAMESHLSKSGTPTMGGVLILGAIAISTLLWFDLSNRFVWVVLAVTLGFGAIGWVDDWRKVVRKDPEGMRSREKYFWQSVIGIVAALYLVFCISENSNARVFELFVTWIQSGFSMDLPPQAGLLVPFFKEVSYPLGVLGFVILTYLVIVGSSNAVNLTDGLDGLAIMPVVMVGASLGVFAYVTGSAVYSKYLLFPYIAGAGELLIFCSAMAGAGLAFLWFNTHPAQVFMGDVGALALGGALGTIAIIVRQEIVLAIMGGIFVVEALSVMLQVTWFKYTKRRYGEGRRLLKMAPLHHHFEKSGWKETQVVVRFWIITMLLCLIGLTTLKLR.

Helical transmembrane passes span 24–44 (YLTF…LLAG), 76–96 (TMGG…WFDL), 100–120 (FVWV…VDDW), 137–157 (YFWQ…CISE), 193–213 (VSYP…IVGS), 225–245 (GLAI…AYVT), 262–282 (AGEL…FLWF), 289–309 (VFMG…IAII), 314–334 (IVLA…MLQV), and 369–389 (QVVV…LTTL).

Belongs to the glycosyltransferase 4 family. MraY subfamily. Requires Mg(2+) as cofactor.

The protein localises to the cell inner membrane. It carries out the reaction UDP-N-acetyl-alpha-D-muramoyl-L-alanyl-gamma-D-glutamyl-meso-2,6-diaminopimeloyl-D-alanyl-D-alanine + di-trans,octa-cis-undecaprenyl phosphate = di-trans,octa-cis-undecaprenyl diphospho-N-acetyl-alpha-D-muramoyl-L-alanyl-D-glutamyl-meso-2,6-diaminopimeloyl-D-alanyl-D-alanine + UMP. The protein operates within cell wall biogenesis; peptidoglycan biosynthesis. Functionally, catalyzes the initial step of the lipid cycle reactions in the biosynthesis of the cell wall peptidoglycan: transfers peptidoglycan precursor phospho-MurNAc-pentapeptide from UDP-MurNAc-pentapeptide onto the lipid carrier undecaprenyl phosphate, yielding undecaprenyl-pyrophosphoryl-MurNAc-pentapeptide, known as lipid I. This chain is Phospho-N-acetylmuramoyl-pentapeptide-transferase, found in Paracidovorax citrulli (strain AAC00-1) (Acidovorax citrulli).